The primary structure comprises 307 residues: Streptomycin 6-kinase (307 aa).

Position 133 to 145 (133 to 145 (LAGLLNRLHSVPA)) interacts with streptomycin. Aspartate 201 acts as the Proton acceptor in catalysis.

The protein belongs to the aminoglycoside phosphotransferase family.

It catalyses the reaction streptomycin + ATP = streptomycin 6-phosphate + ADP + H(+). In terms of biological role, the aminoglycoside phosphotransferases achieve inactivation of their antibiotic substrates by phosphorylation. The polypeptide is Streptomycin 6-kinase (aphD) (Streptomyces griseus).